The following is a 105-amino-acid chain: TMEM14 protein homolog YJR085C (105 aa).

3 helical membrane passes run 26-46 (IPSL…GYLL), 53-73 (GLEM…IRGM), and 77-97 (FTKP…YYYY).

This sequence belongs to the TMEM14 family.

It localises to the mitochondrion. Its subcellular location is the membrane. This Saccharomyces cerevisiae (strain ATCC 204508 / S288c) (Baker's yeast) protein is TMEM14 protein homolog YJR085C.